We begin with the raw amino-acid sequence, 435 residues long: Gap junction alpha-3 protein (435 aa).

An intramembrane segment occupies 2–15 (GDWSFLGRLLENAQ). At 16-19 (EHST) the chain is on the cytoplasmic side. A helical transmembrane segment spans residues 20–40 (VIGKVWLTVLFIFRILVLGAA). Over 41-71 (AEDVWGDEQSDFTCNTQQPGCENVCYDRAFP) the chain is Extracellular. Intrachain disulfides connect cysteine 54-cysteine 192, cysteine 61-cysteine 186, and cysteine 65-cysteine 181. Residues 72–92 (ISHIRFWALQIIFVSTPTLIY) form a helical membrane-spanning segment. Over 93-152 (LGHVLHIVRMEEKKKEREEEEQLKRESPSPKEPPQDNPSSRDDRGRVRMAGALLRTYVFN) the chain is Cytoplasmic. Basic and acidic residues predominate over residues 108-121 (EREEEEQLKRESPS). Residues 108–136 (EREEEEQLKRESPSPKEPPQDNPSSRDDR) form a disordered region. The chain crosses the membrane as a helical span at residues 153-173 (IIFKTLFEVGFIAGQYFLYGF). The Extracellular portion of the chain corresponds to 174–201 (ELKPLYRCDRWPCPNTVDCFISRPTEKT). A helical membrane pass occupies residues 202-222 (IFIIFMLAVACASLLLNMLEI). Topologically, residues 223-435 (YHLGWKKLKQ…GRARPEDLAI (213 aa)) are cytoplasmic. The disordered stretch occupies residues 332–435 (AAERQPPALK…GRARPEDLAI (104 aa)). 2 stretches are compositionally biased toward low complexity: residues 342 to 389 (AYPA…ALAG) and 415 to 427 (GRAS…SSGR).

This sequence belongs to the connexin family. Alpha-type (group II) subfamily. A hemichannel or connexon is composed of a hexamer of connexins. A functional gap junction is formed by the apposition of two hemichannels. Forms heteromeric channels with GJA8.

It is found in the cell membrane. The protein localises to the cell junction. It localises to the gap junction. Functionally, structural component of lens fiber gap junctions. Gap junctions are dodecameric channels that connect the cytoplasm of adjoining cells. They are formed by the docking of two hexameric hemichannels, one from each cell membrane. Small molecules and ions diffuse from one cell to a neighboring cell via the central pore. The sequence is that of Gap junction alpha-3 protein (GJA3) from Homo sapiens (Human).